Reading from the N-terminus, the 338-residue chain is 1-aminocyclopropane-1-carboxylate deaminase (338 aa).

Lys-51 is modified (N6-(pyridoxal phosphate)lysine). Ser-78 acts as the Nucleophile in catalysis.

The protein belongs to the ACC deaminase/D-cysteine desulfhydrase family. As to quaternary structure, homotrimer. The cofactor is pyridoxal 5'-phosphate.

It carries out the reaction 1-aminocyclopropane-1-carboxylate + H2O = 2-oxobutanoate + NH4(+). Functionally, catalyzes a cyclopropane ring-opening reaction, the irreversible conversion of 1-aminocyclopropane-1-carboxylate (ACC) to ammonia and alpha-ketobutyrate. Allows growth on ACC as a nitrogen source. The protein is 1-aminocyclopropane-1-carboxylate deaminase of Pseudomonas syringae pv. syringae (strain B728a).